We begin with the raw amino-acid sequence, 84 residues long: CDC42 small effector protein 2 (84 aa).

2 S-palmitoyl cysteine lipidation sites follow: C10 and C11. A CRIB domain is found at 29–42 (IGEPTNFVHTAHVG). 2 positions are modified to phosphoserine: S43 and S52.

It belongs to the CDC42SE/SPEC family. Interacts with CDC42 (in GTP-bound form). Interacts weakly with RAC1 and not at all with RHOA.

The protein resides in the cytoplasm. Its subcellular location is the cytoskeleton. It localises to the cell membrane. The protein localises to the cell projection. It is found in the phagocytic cup. Functionally, probably involved in the organization of the actin cytoskeleton by acting downstream of CDC42, inducing actin filament assembly. Alters CDC42-induced cell shape changes. In activated T-cells, may play a role in CDC42-mediated F-actin accumulation at the immunological synapse. May play a role in early contractile events in phagocytosis in macrophages. This chain is CDC42 small effector protein 2 (CDC42SE2), found in Bos taurus (Bovine).